The following is a 669-amino-acid chain: Carnitine O-palmitoyltransferase 2, mitochondrial (669 aa).

Residues 1 to 36 (MMAGLLSTQCNSTLSKLKHLSNNPALSVLTSTHRKY) constitute a mitochondrion transit peptide. Over 37–190 (SSKDGAGSEY…GLLEPEVFHL (154 aa)) the chain is Mitochondrial matrix. Residues 191 to 220 (NPAKSDTDSFKKLIRWVPPSISWFGAYMVN) constitute an intramembrane region (note=Mitochondrial inner membrane). The Mitochondrial matrix portion of the chain corresponds to 221-669 (AYPLDMSQYF…FTVLDGNPIH (449 aa)). The active-site Proton acceptor is His384. 464 to 476 (GKEQLKKKKLSPD) is a CoA binding site. (R)-carnitine-binding residues include Tyr498, Ser500, and Thr511.

It belongs to the carnitine/choline acetyltransferase family.

The protein resides in the mitochondrion inner membrane. It catalyses the reaction (R)-carnitine + hexadecanoyl-CoA = O-hexadecanoyl-(R)-carnitine + CoA. The enzyme catalyses octanoyl-CoA + (R)-carnitine = O-octanoyl-(R)-carnitine + CoA. It carries out the reaction decanoyl-CoA + (R)-carnitine = O-decanoyl-(R)-carnitine + CoA. The catalysed reaction is dodecanoyl-CoA + (R)-carnitine = O-dodecanoyl-R-carnitine + CoA. It catalyses the reaction tetradecanoyl-CoA + (R)-carnitine = O-tetradecanoyl-(R)-carnitine + CoA. The enzyme catalyses (R)-carnitine + octadecanoyl-CoA = O-octadecanoyl-(R)-carnitine + CoA. It carries out the reaction eicosanoyl-CoA + (R)-carnitine = O-eicosanoyl-(R)-carnitine + CoA. The catalysed reaction is (9Z)-tetradecenoyl-CoA + (R)-carnitine = O-(9Z)-tetradecenoyl-(R)-carnitine + CoA. It catalyses the reaction (5Z)-tetradecenoyl-CoA + (R)-carnitine = O-(5Z)-tetradecenoyl-(R)-carnitine + CoA. The enzyme catalyses (R)-carnitine + (9Z)-octadecenoyl-CoA = O-(9Z)-octadecenoyl-(R)-carnitine + CoA. It carries out the reaction 4,8-dimethylnonanoyl-CoA + (R)-carnitine = O-4,8-dimethylnonanoyl-(R)-carnitine + CoA. It participates in lipid metabolism; fatty acid beta-oxidation. In terms of biological role, involved in the intramitochondrial synthesis of acylcarnitines from accumulated acyl-CoA metabolites. Reconverts acylcarnitines back into the respective acyl-CoA esters that can then undergo beta-oxidation, an essential step for the mitochondrial uptake of long-chain fatty acids and their subsequent beta-oxidation in the mitochondrion. Active with medium (C8-C12) and long-chain (C14-C18) acyl-CoA esters. The chain is Carnitine O-palmitoyltransferase 2, mitochondrial (cpt2) from Danio rerio (Zebrafish).